Here is a 353-residue protein sequence, read N- to C-terminus: UDP-3-O-acylglucosamine N-acyltransferase (353 aa).

Catalysis depends on histidine 242, which acts as the Proton acceptor.

Belongs to the transferase hexapeptide repeat family. LpxD subfamily. In terms of assembly, homotrimer.

The catalysed reaction is a UDP-3-O-[(3R)-3-hydroxyacyl]-alpha-D-glucosamine + a (3R)-hydroxyacyl-[ACP] = a UDP-2-N,3-O-bis[(3R)-3-hydroxyacyl]-alpha-D-glucosamine + holo-[ACP] + H(+). Its pathway is bacterial outer membrane biogenesis; LPS lipid A biosynthesis. Functionally, catalyzes the N-acylation of UDP-3-O-acylglucosamine using 3-hydroxyacyl-ACP as the acyl donor. Is involved in the biosynthesis of lipid A, a phosphorylated glycolipid that anchors the lipopolysaccharide to the outer membrane of the cell. This is UDP-3-O-acylglucosamine N-acyltransferase from Pseudomonas aeruginosa (strain LESB58).